We begin with the raw amino-acid sequence, 98 residues long: MALTKAEMAEHLFEKLGMNKRDAKDLVEAFFEEVREALESGEQVKLSGFGNFDLRQKSERPGRNPKTGEDIPIKARRVVTFRPGQKLKSRVENTKPTE.

The tract at residues 52–73 (FDLRQKSERPGRNPKTGEDIPI) is disordered. Residues 54-73 (LRQKSERPGRNPKTGEDIPI) are compositionally biased toward basic and acidic residues.

It belongs to the bacterial histone-like protein family. Heterodimer of an alpha and a beta chain.

Functionally, this protein is one of the two subunits of integration host factor, a specific DNA-binding protein that functions in genetic recombination as well as in transcriptional and translational control. In Pseudoalteromonas atlantica (strain T6c / ATCC BAA-1087), this protein is Integration host factor subunit alpha.